We begin with the raw amino-acid sequence, 545 residues long: High-molecular-weight cytochrome c (545 aa).

A signal peptide spans 1-31; sequence MRNGRTLLRWAGVLAATAIIGVGGFWSQGTT. Heme c is bound by residues His66, His69, Cys80, Cys83, His84, His111, Cys114, Cys117, His118, Cys135, Cys138, His139, His159, His162, Cys178, Cys181, His182, His183, Cys202, Cys205, His206, His222, Cys225, Cys228, His229, Cys244, Cys247, His248, His298, His301, Cys308, Cys311, His312, His313, Cys319, Cys322, His323, His341, Cys349, Cys352, His353, Cys362, Cys365, His366, Cys378, Cys381, His382, His449, His470, Cys477, Cys480, His481, His482, Cys493, Cys496, His497, His516, Cys519, Cys522, His523, Cys536, Cys539, and His540.

Monomer. Binds 16 heme c groups per subunit. High-spin heme 15 has single axial histidine ligand and the other hemes are low-spin bis-histidinyl coordinated.

It is found in the periplasm. Functionally, HMWC (high-molecular-weight cytochrome c), ORF2, ORF3, ORF4, ORF5 and ORF6 in the HMC operon form a transmembrane protein complex that allows electron flow from the periplasmic hydrogenase to the cytoplasmic enzymes that catalyze reduction of sulfates. The sequence is that of High-molecular-weight cytochrome c (hmcA) from Nitratidesulfovibrio vulgaris (strain ATCC 29579 / DSM 644 / CCUG 34227 / NCIMB 8303 / VKM B-1760 / Hildenborough) (Desulfovibrio vulgaris).